The chain runs to 198 residues: uncharacterized protein (198 aa).

Residues 166 to 198 form a disordered region; sequence GYEPDEKARKKRERVKRSEVEDQLKINVKPTRR.

This is an uncharacterized protein from Coxiella burnetii (strain RSA 493 / Nine Mile phase I).